A 326-amino-acid polypeptide reads, in one-letter code: Prenyl transferase nodC (326 aa).

A helical transmembrane segment spans residues 8–28 (LAAVLFSALFSLGVILVHLPW). H95 lines the isopentenyl diphosphate pocket. Residues D102 and D106 each coordinate Mg(2+). Residue R111 participates in dimethylallyl diphosphate binding. Residue N139 is glycosylated (N-linked (GlcNAc...) asparagine). K195 lines the dimethylallyl diphosphate pocket. A glycan (N-linked (GlcNAc...) asparagine) is linked at N210.

This sequence belongs to the FPP/GGPP synthase family.

The protein resides in the membrane. It participates in secondary metabolite biosynthesis. Its function is as follows. Cytochrome P450 monooxygenase; part of the gene cluster that mediates the biosynthesis of the indole diterpenes nodulisporic acids (NA). Nodulisporic acid A (NAA) and its chemically modified derivatives are of particular significance because of their highly potent insecticidal activity against blood-feeding arthropods and lack of observable adverse effects on mammals, in particular the tremogenicity associated with the paspaline-derived IDTs is not observed. The geranylgeranyl diphosphate (GGPP) synthase ggs1, localized outside of the cluster, is proposed to catalyze the first step in nodulisporic acid biosynthesis via conversion of farnesyl pyrophosphate and isopentyl pyrophosphate into geranylgeranyl pyrophosphate (GGPP). Condensation of indole-3-glycerol phosphate with GGPP by the prenyl transferase nodC then forms 3-geranylgeranylindole (3-GGI). Epoxidation by the FAD-dependent monooxygenase nodM leads to a single-epoxidized-GGI that is substrate of the terpene cyclase nodB for cyclization to yield emindole SB. The terminal methyl carbon, C28, of emindole SB is then oxidized by the cytochrome P450 monooxygenase nodW to produce nodulisporic acid F (NAF), the pentacyclic core of NAA. NAF is converted to nodulisporic acid E (NAE) via prenylation. This step is probably performed by one of the indole diterpene prenyltransferases nodD1 or nodD2. Several oxidation steps performed by the FAD-linked oxidoreductase nodO and one of the cytochrome P450 monooxygenase nodR, nodX or nodZ further convert NAE to nodulisporic acid D (NAD). NAD is substrate of cytochrome P450 monooxygenase nodJ to produce the precursor of nodulisporic acid C (NAC), converted to NAC by one of the indole diterpene prenyltransferases nodD1 or nodD2. The FAD-dependent monooxygenase nodY2 then oxidizes NAC to nodulisporic acid B (NAB). Finally NAB is converted to NAA by one of the cytochrome P450 monooxygenases nodR, nodX or nodZ. This is Prenyl transferase nodC from Hypoxylon pulicicidum.